We begin with the raw amino-acid sequence, 206 residues long: Thymidylate kinase (206 aa).

7–14 (GGEGSGKS) is a binding site for ATP.

This sequence belongs to the thymidylate kinase family.

The enzyme catalyses dTMP + ATP = dTDP + ADP. Functionally, phosphorylation of dTMP to form dTDP in both de novo and salvage pathways of dTTP synthesis. The sequence is that of Thymidylate kinase (tmk) from Chlamydia pneumoniae (Chlamydophila pneumoniae).